Here is a 304-residue protein sequence, read N- to C-terminus: Acetyl-coenzyme A carboxylase carboxyl transferase subunit beta (304 aa).

In terms of domain architecture, CoA carboxyltransferase N-terminal spans 23-292; it reads VWTKCDSCGQ…PNPEAPREGV (270 aa). Zn(2+) contacts are provided by Cys27, Cys30, Cys46, and Cys49. A C4-type zinc finger spans residues 27-49; that stretch reads CDSCGQVLYRAELERNLEVCPKC. Residues 285–304 form a disordered region; sequence PEAPREGVVVPPVPDQEPEA. The span at 295-304 shows a compositional bias: pro residues; it reads PPVPDQEPEA.

Belongs to the AccD/PCCB family. As to quaternary structure, acetyl-CoA carboxylase is a heterohexamer composed of biotin carboxyl carrier protein (AccB), biotin carboxylase (AccC) and two subunits each of ACCase subunit alpha (AccA) and ACCase subunit beta (AccD). Requires Zn(2+) as cofactor.

It localises to the cytoplasm. The enzyme catalyses N(6)-carboxybiotinyl-L-lysyl-[protein] + acetyl-CoA = N(6)-biotinyl-L-lysyl-[protein] + malonyl-CoA. It participates in lipid metabolism; malonyl-CoA biosynthesis; malonyl-CoA from acetyl-CoA: step 1/1. Component of the acetyl coenzyme A carboxylase (ACC) complex. Biotin carboxylase (BC) catalyzes the carboxylation of biotin on its carrier protein (BCCP) and then the CO(2) group is transferred by the transcarboxylase to acetyl-CoA to form malonyl-CoA. This is Acetyl-coenzyme A carboxylase carboxyl transferase subunit beta from Escherichia coli O6:H1 (strain CFT073 / ATCC 700928 / UPEC).